A 343-amino-acid chain; its full sequence is Aspartate carbamoyltransferase catalytic subunit (343 aa).

Polar residues predominate over residues 1–14; it reads MTTDTTGRTGNPAA. Residues 1–20 are disordered; that stretch reads MTTDTTGRTGNPAATASPDR. Positions 91 and 92 each coordinate carbamoyl phosphate. Residue Lys-119 participates in L-aspartate binding. 3 residues coordinate carbamoyl phosphate: Arg-141, His-171, and Gln-174. L-aspartate-binding residues include Arg-204 and Arg-259. Carbamoyl phosphate is bound by residues Gly-300 and Pro-301.

It belongs to the aspartate/ornithine carbamoyltransferase superfamily. ATCase family. Heterododecamer (2C3:3R2) of six catalytic PyrB chains organized as two trimers (C3), and six regulatory PyrI chains organized as three dimers (R2).

The enzyme catalyses carbamoyl phosphate + L-aspartate = N-carbamoyl-L-aspartate + phosphate + H(+). Its pathway is pyrimidine metabolism; UMP biosynthesis via de novo pathway; (S)-dihydroorotate from bicarbonate: step 2/3. Functionally, catalyzes the condensation of carbamoyl phosphate and aspartate to form carbamoyl aspartate and inorganic phosphate, the committed step in the de novo pyrimidine nucleotide biosynthesis pathway. In Burkholderia lata (strain ATCC 17760 / DSM 23089 / LMG 22485 / NCIMB 9086 / R18194 / 383), this protein is Aspartate carbamoyltransferase catalytic subunit.